The following is a 211-amino-acid chain: MKLRTVAASLLLMLSATTVRASAADVGAPVPIYTEAELIKLIEQNKHLQRVRADNCQLVEDIVARATRINLPAYEFLYGDMLAWGVCVEQDVELGLYYMENAAQQGLPAALEQIGRYYSRGTLVQQDKERAIPYLREAASMGNLNARIHLAELLLRDYGSPLDYEDAYRWLYNSVTADQRQHKRIAVLRRGLEQRMPQNIVARAKRRDMFW.

3 Sel1-like repeats span residues Pro72 to Leu107, Pro108 to Asn143, and Leu144 to Gln179.

The protein localises to the cell inner membrane. Functionally, the power to drive the polar flagellar rotary motor of V.parahaemolyticus is derived from the transmembrane potential of sodium ions. Force is generated by the motor on coupling of the movement of ions across the membrane to rotation of the flagellum. MotX interacts with MotY, which is the presumed stationary component of the motor. MotX may form a sodium channel. In Vibrio parahaemolyticus serotype O3:K6 (strain RIMD 2210633), this protein is Sodium-type polar flagellar protein MotX (motX).